Reading from the N-terminus, the 354-residue chain is tRNA N6-adenosine threonylcarbamoyltransferase (354 aa).

Positions 111 and 115 each coordinate Fe cation. Substrate is bound by residues 134 to 138 (LVSGG), D167, G180, and N279. Residue D319 coordinates Fe cation.

This sequence belongs to the KAE1 / TsaD family. The cofactor is Fe(2+).

The protein localises to the cytoplasm. It carries out the reaction L-threonylcarbamoyladenylate + adenosine(37) in tRNA = N(6)-L-threonylcarbamoyladenosine(37) in tRNA + AMP + H(+). Required for the formation of a threonylcarbamoyl group on adenosine at position 37 (t(6)A37) in tRNAs that read codons beginning with adenine. Is involved in the transfer of the threonylcarbamoyl moiety of threonylcarbamoyl-AMP (TC-AMP) to the N6 group of A37, together with TsaE and TsaB. TsaD likely plays a direct catalytic role in this reaction. This Neisseria meningitidis serogroup A / serotype 4A (strain DSM 15465 / Z2491) protein is tRNA N6-adenosine threonylcarbamoyltransferase.